Here is a 462-residue protein sequence, read N- to C-terminus: Argininosuccinate lyase (462 aa).

Belongs to the lyase 1 family. Argininosuccinate lyase subfamily.

The protein resides in the cytoplasm. The enzyme catalyses 2-(N(omega)-L-arginino)succinate = fumarate + L-arginine. It participates in amino-acid biosynthesis; L-arginine biosynthesis; L-arginine from L-ornithine and carbamoyl phosphate: step 3/3. This is Argininosuccinate lyase from Bacillus cereus (strain ATCC 14579 / DSM 31 / CCUG 7414 / JCM 2152 / NBRC 15305 / NCIMB 9373 / NCTC 2599 / NRRL B-3711).